The chain runs to 571 residues: Arginine--tRNA ligase (571 aa).

The 'HIGH' region signature appears at 122-132; the sequence is PNIAKEMHVGH.

This sequence belongs to the class-I aminoacyl-tRNA synthetase family. As to quaternary structure, monomer.

The protein resides in the cytoplasm. The enzyme catalyses tRNA(Arg) + L-arginine + ATP = L-arginyl-tRNA(Arg) + AMP + diphosphate. The sequence is that of Arginine--tRNA ligase from Buchnera aphidicola subsp. Cinara cedri (strain Cc).